The chain runs to 409 residues: MSSHPIQVFSEIGKLKKVMLHRPGKELENLLPDYLERLLFDDIPFLEDAQKEHDAFAQALRDEGIEVLYLEQLAAESLTSPEIRDQFIEEYLDEANIRDRQTKVAIRELLHGIKDNQELVEKTMAGIQKVELPEIPDEAKDLTDLVESEYPFAIDPMPNLYFTRDPFATIGNAVSLNHMFADTRNRETLYGKYIFKYHPIYGGKVDLVYNREEDTRIEGGDELVLSKDVLAVGISQRTDAASIEKLLVNIFKKNVGFKKVLAFEFANNRKFMHLDTVFTMVDYDKFTIHPEIEGDLHVYSVTYENEKLKIVEEKGDLAELLAQNLGVEKVHLIRCGGGNIVAAAREQWNDGSNTLTIAPGVVVVYDRNTVTNKILEEYGLRLIKIRGSELVRGRGGPRCMSMPFEREEV.

Cysteine 399 (amidino-cysteine intermediate) is an active-site residue.

It belongs to the arginine deiminase family.

It is found in the cytoplasm. The catalysed reaction is L-arginine + H2O = L-citrulline + NH4(+). Its pathway is amino-acid degradation; L-arginine degradation via ADI pathway; carbamoyl phosphate from L-arginine: step 1/2. In Streptococcus pneumoniae (strain P1031), this protein is Arginine deiminase.